We begin with the raw amino-acid sequence, 307 residues long: Oxygen-dependent coproporphyrinogen-III oxidase (307 aa).

Ser99 is a binding site for substrate. A divalent metal cation contacts are provided by His103 and His113. The active-site Proton donor is His113. Residue 115-117 coordinates substrate; that stretch reads NVR. Residues His152 and His182 each contribute to the a divalent metal cation site. The segment at 247–282 is important for dimerization; it reads YVEFNLVFDRGTLFGLQSGGRTESILLSMPPTAGWR. Position 265-267 (265-267) interacts with substrate; the sequence is GGR.

This sequence belongs to the aerobic coproporphyrinogen-III oxidase family. Homodimer. A divalent metal cation is required as a cofactor.

The protein resides in the cytoplasm. It carries out the reaction coproporphyrinogen III + O2 + 2 H(+) = protoporphyrinogen IX + 2 CO2 + 2 H2O. It functions in the pathway porphyrin-containing compound metabolism; protoporphyrin-IX biosynthesis; protoporphyrinogen-IX from coproporphyrinogen-III (O2 route): step 1/1. Its function is as follows. Involved in the heme biosynthesis. Catalyzes the aerobic oxidative decarboxylation of propionate groups of rings A and B of coproporphyrinogen-III to yield the vinyl groups in protoporphyrinogen-IX. This chain is Oxygen-dependent coproporphyrinogen-III oxidase, found in Burkholderia pseudomallei (strain 1106a).